A 369-amino-acid polypeptide reads, in one-letter code: Uroporphyrinogen decarboxylase (369 aa).

Positions 1 to 26 (MPVLHVDARPGSGPGGVSPPPSGAAL) are disordered. Substrate-binding positions include 56-60 (RQAGR), Asp-105, Tyr-180, Ser-235, and His-348.

The protein belongs to the uroporphyrinogen decarboxylase family. Homodimer.

The protein resides in the cytoplasm. It catalyses the reaction uroporphyrinogen III + 4 H(+) = coproporphyrinogen III + 4 CO2. It functions in the pathway porphyrin-containing compound metabolism; protoporphyrin-IX biosynthesis; coproporphyrinogen-III from 5-aminolevulinate: step 4/4. Catalyzes the decarboxylation of four acetate groups of uroporphyrinogen-III to yield coproporphyrinogen-III. This chain is Uroporphyrinogen decarboxylase, found in Frankia casuarinae (strain DSM 45818 / CECT 9043 / HFP020203 / CcI3).